The sequence spans 899 residues: Translation initiation factor IF-2 (899 aa).

2 disordered regions span residues 94 to 167 (TFTK…VVVK) and 259 to 309 (FNQE…HGFE). Residues 107 to 121 (AKARQETEERTRPQE) are compositionally biased toward basic and acidic residues. Residues 147–164 (RAAQQKETAKTTSTTTEV) are compositionally biased toward low complexity. Residues 399 to 568 (TRPPVVTIMG…LIQSELMELK (170 aa)) form the tr-type G domain. The tract at residues 408-415 (GHVDHGKT) is G1. 408–415 (GHVDHGKT) provides a ligand contact to GTP. Positions 433 to 437 (GITQH) are G2. The tract at residues 454–457 (DTPG) is G3. Residues 454 to 458 (DTPGH) and 508 to 511 (NKMD) each bind GTP. The segment at 508-511 (NKMD) is G4. The interval 544–546 (SAH) is G5.

Belongs to the TRAFAC class translation factor GTPase superfamily. Classic translation factor GTPase family. IF-2 subfamily.

It is found in the cytoplasm. In terms of biological role, one of the essential components for the initiation of protein synthesis. Protects formylmethionyl-tRNA from spontaneous hydrolysis and promotes its binding to the 30S ribosomal subunits. Also involved in the hydrolysis of GTP during the formation of the 70S ribosomal complex. In Acinetobacter baylyi (strain ATCC 33305 / BD413 / ADP1), this protein is Translation initiation factor IF-2.